Reading from the N-terminus, the 180-residue chain is NADH-quinone oxidoreductase subunit I (180 aa).

4Fe-4S ferredoxin-type domains follow at residues Ile-48–Ala-80 and Glu-90–Asp-119. Cys-60, Cys-63, Cys-66, Cys-70, Cys-99, Cys-102, Cys-105, and Cys-109 together coordinate [4Fe-4S] cluster. Positions Lys-161–Asp-174 are enriched in basic and acidic residues. Positions Lys-161–Pro-180 are disordered.

Belongs to the complex I 23 kDa subunit family. In terms of assembly, NDH-1 is composed of 14 different subunits. Subunits NuoA, H, J, K, L, M, N constitute the membrane sector of the complex. [4Fe-4S] cluster is required as a cofactor.

It localises to the cell inner membrane. The enzyme catalyses a quinone + NADH + 5 H(+)(in) = a quinol + NAD(+) + 4 H(+)(out). Its function is as follows. NDH-1 shuttles electrons from NADH, via FMN and iron-sulfur (Fe-S) centers, to quinones in the respiratory chain. The immediate electron acceptor for the enzyme in this species is believed to be ubiquinone. Couples the redox reaction to proton translocation (for every two electrons transferred, four hydrogen ions are translocated across the cytoplasmic membrane), and thus conserves the redox energy in a proton gradient. The chain is NADH-quinone oxidoreductase subunit I from Aeromonas salmonicida (strain A449).